We begin with the raw amino-acid sequence, 315 residues long: Olfactory receptor 3A3 (315 aa).

The Extracellular portion of the chain corresponds to Met-1–Ser-28. The N-linked (GlcNAc...) asparagine glycan is linked to Asn-8. Residues Val-29 to Ile-52 form a helical membrane-spanning segment. The Cytoplasmic portion of the chain corresponds to Leu-53 to Thr-60. The helical transmembrane segment at Pro-61–Pro-82 threads the bilayer. At Ala-83–Gln-103 the chain is on the extracellular side. Cys-100 and Cys-192 are disulfide-bonded. The chain crosses the membrane as a helical span at residues Leu-104–Tyr-123. Residues Asp-124–Val-143 lie on the Cytoplasmic side of the membrane. Residues Gln-144–Thr-161 traverse the membrane as a helical segment. Over His-162–Glu-199 the chain is Extracellular. A helical transmembrane segment spans residues Leu-200 to Ala-222. Residues His-223–Lys-239 are Cytoplasmic-facing. The helical transmembrane segment at Ala-240–Tyr-262 threads the bilayer. Residues Met-263 to Lys-275 lie on the Extracellular side of the membrane. The chain crosses the membrane as a helical span at residues Gly-276 to Leu-295. The Cytoplasmic portion of the chain corresponds to Arg-296–Thr-315.

Belongs to the G-protein coupled receptor 1 family.

It is found in the cell membrane. In terms of biological role, odorant receptor. The polypeptide is Olfactory receptor 3A3 (OR3A3) (Pan troglodytes (Chimpanzee)).